Reading from the N-terminus, the 36-residue chain is Amanexitide proprotein 2 (36 aa).

Positions Met1–Pro10 are excised as a propeptide. Residues Val11–Pro19 constitute a cross-link (cyclopeptide (Val-Pro)). The propeptide occupies Phe20–Cys36.

It belongs to the MSDIN fungal toxin family. Processed by the macrocyclase-peptidase enzyme POPB to yield a toxic cyclic nonapeptide. POPB first removes 10 residues from the N-terminus. Conformational trapping of the remaining peptide forces the enzyme to release this intermediate rather than proceed to macrocyclization. The enzyme rebinds the remaining peptide in a different conformation and catalyzes macrocyclization of the N-terminal 9 residues. Expressed in basidiocarps.

Its function is as follows. Cyclic nonapeptide that belongs to the MSDIN-like toxin family responsible for a large number of food poisoning cases and deaths. This Amanita exitialis (Guangzhou destroying angel) protein is Amanexitide proprotein 2.